A 219-amino-acid chain; its full sequence is MVDSIIVLSGGMDSAVLLAQTLKEGKTAQAISFDYGSKHNDRELPMAVGLCEEFAIKHQIIKLPFIGELFSSSLLTGGEEIPDGAYGQENMKSTVVPFRNGIMLAIAAGYAESVQAGEVLLGSHSGDHHIYPDCRPEFNNAFAEAVNLGTDGQVAIRFPFSEMTKRDIGDLGRTLDLDFAKTWTCYKGGELHCGVCAACDERKEALRHPEGLDVTKYLV.

8-18 (LSGGMDSAVLL) is a binding site for ATP. Zn(2+) is bound by residues Cys185, Cys193, Cys196, and Cys199.

The protein belongs to the QueC family. Zn(2+) serves as cofactor.

The catalysed reaction is 7-carboxy-7-deazaguanine + NH4(+) + ATP = 7-cyano-7-deazaguanine + ADP + phosphate + H2O + H(+). It functions in the pathway purine metabolism; 7-cyano-7-deazaguanine biosynthesis. Its function is as follows. Catalyzes the ATP-dependent conversion of 7-carboxy-7-deazaguanine (CDG) to 7-cyano-7-deazaguanine (preQ(0)). The protein is 7-cyano-7-deazaguanine synthase of Desulfotalea psychrophila (strain LSv54 / DSM 12343).